Reading from the N-terminus, the 393-residue chain is GTP exchange factor for ARFs 1 (393 aa).

A compositionally biased stretch (polar residues) spans 1 to 12 (MSSRYSERNGLS). The segment at 1–21 (MSSRYSERNGLSETEKMTLPK) is disordered. Residues 12–54 (SETEKMTLPKVRKRKAQLVDEIEALKNEVREVDEELDQVYYTH) are a coiled coil. Residues 53-239 (THPKSKEYHK…TEVYESVSVT (187 aa)) form the SEC7 domain. A PH domain is found at 261–377 (HAEREGWLFK…MRSWINAISR (117 aa)).

Its function is as follows. Promotes guanine-nucleotide exchange on ARF. Promotes the activation of ARF through replacement of GDP with GTP. Plays a role in cell shedding during embryogenesis, probably by promoting the endocytosis of cell adhesion molecules. The sequence is that of GTP exchange factor for ARFs 1 (grp-1) from Caenorhabditis elegans.